A 580-amino-acid chain; its full sequence is MAFHVEGLIAIIVFYLLILLVGIWAAWRTKNSGSAEERSEAIIVGGRDIGLLVGGFTMTATWVGGGYINGTAEAVYVPGYGLAWAQAPIGYSLSLILGGLFFAKPMRSKGYVTMLDPFQQIYGKRMGGLLFIPALMGEMFWAAAIFSALGATISVIIDVDMHISVIISALIATLYTLVGGLYSVAYTDVVQLFCIFVGLWISVPFALSHPAVADIGFTAVHAKYQKPWLGTVDSSEVYSWLDSFLLLMLGGIPWQAYFQRVLSSSSATYAQVLSFLAAFGCLVMAIPAILIGAIGASTDWNQTAYGLPDPKTTEEADMILPIVLQYLCPVYISFFGLGAVSAAVMSSADSSILSASSMFARNIYQLSFRQNASDKEIVWVMRITVFVFGASATAMALLTKTVYGLWYLSSDLVYIVIFPQLLCVLFVKGTNTYGAVAGYVSGLFLRITGGEPYLYLQPLIFYPGYYPDDNGIYNQKFPFKTLAMVTSFLTNICISYLAKYLFESGTLPPKLDVFDAVVARHSEENMDKTILVKNENIKLDELALVKPRQSMTLSSTFTNKEAFLDVDSSPEGSGTEDNLQ.

Residues 1-6 (MAFHVE) are Extracellular-facing. The helical transmembrane segment at 7 to 27 (GLIAIIVFYLLILLVGIWAAW) threads the bilayer. At 28–48 (RTKNSGSAEERSEAIIVGGRD) the chain is on the cytoplasmic side. The chain crosses the membrane as a helical span at residues 49–69 (IGLLVGGFTMTATWVGGGYIN). Residues 70–81 (GTAEAVYVPGYG) are Extracellular-facing. Residues 82 to 102 (LAWAQAPIGYSLSLILGGLFF) form a helical membrane-spanning segment. Topologically, residues 103-125 (AKPMRSKGYVTMLDPFQQIYGKR) are cytoplasmic. Residues 126–146 (MGGLLFIPALMGEMFWAAAIF) traverse the membrane as a helical segment. The Extracellular segment spans residues 147 to 164 (SALGATISVIIDVDMHIS). Residues 165-185 (VIISALIATLYTLVGGLYSVA) form a helical membrane-spanning segment. At 186 to 191 (YTDVVQ) the chain is on the cytoplasmic side. A helical transmembrane segment spans residues 192–212 (LFCIFVGLWISVPFALSHPAV). Residues 213 to 237 (ADIGFTAVHAKYQKPWLGTVDSSEV) lie on the Extracellular side of the membrane. Residues 238–258 (YSWLDSFLLLMLGGIPWQAYF) form a helical membrane-spanning segment. At 259 to 274 (QRVLSSSSATYAQVLS) the chain is on the cytoplasmic side. Residues 275-295 (FLAAFGCLVMAIPAILIGAIG) traverse the membrane as a helical segment. Residues 296–317 (ASTDWNQTAYGLPDPKTTEEAD) lie on the Extracellular side of the membrane. N301 carries an N-linked (GlcNAc...) asparagine glycan. Residues 318-338 (MILPIVLQYLCPVYISFFGLG) traverse the membrane as a helical segment. Residues 339–376 (AVSAAVMSSADSSILSASSMFARNIYQLSFRQNASDKE) are Cytoplasmic-facing. Residues 377-397 (IVWVMRITVFVFGASATAMAL) form a helical membrane-spanning segment. The Extracellular portion of the chain corresponds to 398–406 (LTKTVYGLW). A helical transmembrane segment spans residues 407–427 (YLSSDLVYIVIFPQLLCVLFV). Topologically, residues 428–435 (KGTNTYGA) are cytoplasmic. The chain crosses the membrane as a helical span at residues 436 to 456 (VAGYVSGLFLRITGGEPYLYL). Residues 457–481 (QPLIFYPGYYPDDNGIYNQKFPFKT) lie on the Extracellular side of the membrane. The chain crosses the membrane as a helical span at residues 482-502 (LAMVTSFLTNICISYLAKYLF). Positions 502–580 (FESGTLPPKL…EGSGTEDNLQ (79 aa)) are mediates interaction with SEC14L1. At 503-580 (ESGTLPPKLD…EGSGTEDNLQ (78 aa)) the chain is on the cytoplasmic side. The Dileucine-like motif signature appears at 527 to 532 (DKTILV).

The protein belongs to the sodium:solute symporter (SSF) (TC 2.A.21) family. In terms of assembly, homooligomerizes at cell surface. Interacts with SEC14L1; may regulate SLC5A7. Phosphorylated. In terms of tissue distribution, expressed in putamen, spinal cord and medulla. Expressed in cholinergic neurons.

The protein localises to the presynaptic cell membrane. Its subcellular location is the cell projection. It localises to the axon. It is found in the early endosome membrane. The protein resides in the cytoplasmic vesicle. The protein localises to the secretory vesicle. Its subcellular location is the synaptic vesicle membrane. It carries out the reaction choline(out) + n Na(+)(out) = choline(in) + n Na(+)(in). Its activity is regulated as follows. Choline uptake activity is regulated by SLC5A7/CHT1 internalization (inactive form) from the cell surface and recycling of internalized SLC5A7/CHT1 into the cell surface (active form). Activated by extracellular chloride ion. Specifically inhibited by nanomolar concentrations of hemicholinium 3. Its function is as follows. High-affinity Na(+)-coupled choline transmembrane symporter. Functions as an electrogenic, voltage-dependent transporter with variable charge/choline stoichiometry. Choline uptake and choline-induced current is also Cl(-)-dependent where Cl(-) is likely a regulatory ion rather than cotransported ion. Plays a critical role in acetylcholine (ACh) synthesis by taking up the substrate choline from the synaptic cleft into the presynaptic nerve terminals after neurotransmitter release. SLC5A7/CHT1-mediated choline high-affinity transport in cholinergic neurons is the rate-limiting step for production of ACh, thereby facilitating communication by subsequent action potentials. Localized predominantly in presynaptic terminal intracellular organelles, and translocated to the plasma membrane in active form in response to neuronal activity. The protein is High affinity choline transporter 1 of Homo sapiens (Human).